The primary structure comprises 306 residues: Glycine--tRNA ligase alpha subunit (306 aa).

This sequence belongs to the class-II aminoacyl-tRNA synthetase family. As to quaternary structure, tetramer of two alpha and two beta subunits.

It is found in the cytoplasm. It catalyses the reaction tRNA(Gly) + glycine + ATP = glycyl-tRNA(Gly) + AMP + diphosphate. This is Glycine--tRNA ligase alpha subunit from Aliivibrio fischeri (strain ATCC 700601 / ES114) (Vibrio fischeri).